The following is a 473-amino-acid chain: Alliin lyase 2 (473 aa).

The first 15 residues, M1–S15, serve as a signal peptide directing secretion. Positions F16–A25 are excised as a propeptide. The 47-residue stretch at E38 to A84 folds into the EGF-like; atypical domain. A glycan (N-linked (GlcNAc...) asparagine) is linked at N44. Intrachain disulfides connect C45-C64, C66-C75, and C69-C82. Residue Y117–F125 coordinates chloride. N171 and N216 each carry an N-linked (GlcNAc...) asparagine glycan. The residue at position 276 (K276) is an N6-(pyridoxal phosphate)lysine. N353 carries an N-linked (GlcNAc...) asparagine glycan. C393 and C401 are joined by a disulfide.

This sequence belongs to the alliinase family. As to quaternary structure, homodimer. The cofactor is pyridoxal 5'-phosphate. Post-translationally, glycosylated. In terms of tissue distribution, high expression in bulbs, lower expression in leaves, and no expression in roots.

Its subcellular location is the vacuole. The catalysed reaction is an S-alkyl-L-cysteine S-oxide = an S-alkyl sulfenate + 2-aminoprop-2-enoate. It carries out the reaction alliin = allylsulfenate + 2-aminoprop-2-enoate. Functionally, able to cleave the C-S bond of sulfoxide derivatives of Cys to produce allicin, thus giving rise to all sulfur compounds which are responsible for most of the properties of garlic, such as the specific smell and flavor as well as the health benefits like blood lipid or blood pressure lowering. The protein is Alliin lyase 2 of Allium sativum (Garlic).